An 864-amino-acid polypeptide reads, in one-letter code: Seed linoleate 9S-lipoxygenase-2 (864 aa).

One can recognise a PLAT domain in the interval 46–171 (SGINIIGSTL…LYKSPRIFFA (126 aa)). The Lipoxygenase domain occupies 174–864 (SYLPSETPSP…FRGIPNSISI (691 aa)). The interval 230–264 (PILGGSSTHPYPRRGRTGRYPTRKDPNSEKPATET) is disordered. The segment covering 251–264 (TRKDPNSEKPATET) has biased composition (basic and acidic residues). 5 residues coordinate Fe cation: histidine 524, histidine 529, histidine 716, asparagine 720, and isoleucine 864.

It belongs to the lipoxygenase family. Fe cation is required as a cofactor.

Its subcellular location is the cytoplasm. The catalysed reaction is (9Z,12Z)-octadecadienoate + O2 = (9S)-hydroperoxy-(10E,12Z)-octadecadienoate. It functions in the pathway lipid metabolism; oxylipin biosynthesis. Plant lipoxygenase may be involved in a number of diverse aspects of plant physiology including growth and development, pest resistance, and senescence or responses to wounding. It catalyzes the hydroperoxidation of lipids containing a cis,cis-1,4-pentadiene structure. In Pisum sativum (Garden pea), this protein is Seed linoleate 9S-lipoxygenase-2 (LOX1.2).